Here is a 200-residue protein sequence, read N- to C-terminus: Phospholipase A2 inhibitor gamma subunit B (200 aa).

Positions methionine 1–cysteine 19 are cleaved as a signal peptide. Cystine bridges form between cysteine 22/cysteine 46, cysteine 25/cysteine 32, cysteine 39/cysteine 67, cysteine 73/cysteine 94, cysteine 95/cysteine 100, cysteine 120/cysteine 145, cysteine 138/cysteine 165, and cysteine 171/cysteine 191. Residue asparagine 33 is glycosylated (N-linked (GlcNAc...) asparagine).

It belongs to the CNF-like-inhibitor family. Heterodimer of subunit A and subunit B. In terms of tissue distribution, expressed by the liver.

The protein resides in the secreted. In terms of biological role, inhibits the enzymatic activity of phospholipase A2 (PA2). In Gloydius brevicaudus siniticus (Chinese mamushi), this protein is Phospholipase A2 inhibitor gamma subunit B.